The sequence spans 367 residues: Phosphoribosylaminoimidazole-succinocarboxamide synthase (367 aa).

It belongs to the SAICAR synthetase family.

The catalysed reaction is 5-amino-1-(5-phospho-D-ribosyl)imidazole-4-carboxylate + L-aspartate + ATP = (2S)-2-[5-amino-1-(5-phospho-beta-D-ribosyl)imidazole-4-carboxamido]succinate + ADP + phosphate + 2 H(+). It functions in the pathway purine metabolism; IMP biosynthesis via de novo pathway; 5-amino-1-(5-phospho-D-ribosyl)imidazole-4-carboxamide from 5-amino-1-(5-phospho-D-ribosyl)imidazole-4-carboxylate: step 1/2. The chain is Phosphoribosylaminoimidazole-succinocarboxamide synthase from Shewanella putrefaciens (strain CN-32 / ATCC BAA-453).